Reading from the N-terminus, the 131-residue chain is Actin-associated protein FAM107A (131 aa).

Residues 57 to 77 are a coiled coil; it reads VLEHRRRNQLIKKKEEELEAK. A Nuclear localization signal motif is present at residues 61 to 71; sequence RRRNQLIKKKE.

Interacts with ACTB. Interacts with COMMD1; this interaction stabilizes COMMD1 in the nucleus. Interacts with MAP1A. Interacts with PRDX1. Interacts with F-actin.

Its subcellular location is the nucleus. It localises to the cytoplasm. The protein resides in the cytoskeleton. The protein localises to the stress fiber. It is found in the cell junction. Its subcellular location is the focal adhesion. It localises to the cell projection. The protein resides in the ruffle membrane. The protein localises to the synapse. Stress-inducible actin-binding protein that plays a role in synaptic and cognitive functions by modulating actin filamentous (F-actin) dynamics. Mediates polymerization of globular actin to F-actin. Also binds to, stabilizes and bundles F-actin. Involved in synaptic function by regulating neurite outgrowth in an actin-dependent manner and for the acquisition of hippocampus-dependent cognitive function, such as learning and long-term memory. Plays a role in the actin and microtubule cytoskeleton organization; negatively regulates focal adhesion (FA) assembly promoting malignant glial cell migration in an actin-, microtubule- and MAP1A-dependent manner. Also involved in neuroblastoma G1/S phase cell cycle progression and cell proliferation inhibition by stimulating ubiquitination of NF-kappa-B subunit RELA and NF-kappa-B degradation in a COMMD1- and actin-dependent manner. May play a role in tumor development. This chain is Actin-associated protein FAM107A, found in Rattus norvegicus (Rat).